A 545-amino-acid chain; its full sequence is MSAILSADDLNDFISPGVACIKPPAQNSDQKFNSLNENGEVEIQIDSEGNPLEISKIDGKQTNLSPAQISLADCLACSGCITSAEEVLVAQHSHEELIKALNEKVDNNSTKVFVASISHQSRASLATAYNLSIEEIDKLLINLFINQMGFKYIVGTSIGRKLSLINEAQNLIEKKESEFDGPVLSSICPGWVLYAEKTHPYVLPRMSTVKSPQQITGCLLKTLAAHELGVTRNDIYHLSIMPCFDKKLESARPEKYGEQNTSNDVDCVLTAKELVTLLEQHSDKFQLIPPQAHTITNSAIPVVDLYSKCAPRTWPLVQYSWSNDSGSASGGYGYNYLKMYQNHLIMKHPTKYQQEGFSIDYVKGRNTDLTEMRLMYGSEKLASSAIVNGFRNIQNLVRKLKPTVKPGSTTGKGNALVARRRARVAGGITKASSPAGSDESADASKCDYVEIMACPNGCINGGGQINPPEDVSEKDWLSASLEKYNSIPLLDLAAMENVDTVAEIMQWSCLFREEFGVSENRLLKTWFNEVEKPTDSASILLGARW.

Residues Cys-20, Cys-74, Cys-77, Cys-80, Cys-188, Cys-243, Cys-454, and Cys-458 each contribute to the [4Fe-4S] cluster site.

It belongs to the NARF family.

Functionally, component of the cytosolic Fe/S protein assembly machinery. Required for maturation of extramitochondrial Fe/S proteins. May play a role in the transfer of pre-assembled Fe/S clusters to target apoproteins. This chain is Cytosolic Fe-S cluster assembly factor NAR1 (NAR1), found in Scheffersomyces stipitis (strain ATCC 58785 / CBS 6054 / NBRC 10063 / NRRL Y-11545) (Yeast).